Reading from the N-terminus, the 572-residue chain is NADH-ubiquinone oxidoreductase chain 5 (572 aa).

A run of 16 helical transmembrane segments spans residues 4-24 (ISFV…LYFL), 44-64 (IVMT…VLMI), 86-106 (IMLV…PNLI), 107-127 (SILL…IYFQ), 147-167 (VALL…YIFY), 170-190 (IMQN…AAMT), 217-237 (SSTL…ILST), 239-259 (WLGQ…GLGA), 268-288 (IIAL…SMGF), 294-314 (FHLL…GAII), 337-357 (SACF…AGFY), 372-394 (NMFS…FRLV), 422-442 (MGLL…IFPF), 457-477 (LFVC…NLFF), 490-510 (FLGS…FYPL), and 552-572 (LKIY…LLFL).

This sequence belongs to the complex I subunit 5 family.

Its subcellular location is the mitochondrion inner membrane. It carries out the reaction a ubiquinone + NADH + 5 H(+)(in) = a ubiquinol + NAD(+) + 4 H(+)(out). Functionally, core subunit of the mitochondrial membrane respiratory chain NADH dehydrogenase (Complex I) that is believed to belong to the minimal assembly required for catalysis. Complex I functions in the transfer of electrons from NADH to the respiratory chain. The immediate electron acceptor for the enzyme is believed to be ubiquinone. This is NADH-ubiquinone oxidoreductase chain 5 (mt:ND5) from Drosophila melanogaster (Fruit fly).